We begin with the raw amino-acid sequence, 149 residues long: Large ribosomal subunit protein bL9 (149 aa).

Belongs to the bacterial ribosomal protein bL9 family.

Functionally, binds to the 23S rRNA. The chain is Large ribosomal subunit protein bL9 from Xylella fastidiosa (strain M23).